Here is a 137-residue protein sequence, read N- to C-terminus: Putative transcription elongation factor S-II-like protein 055R (137 aa).

The TFIIS-type zinc finger occupies 85-136 (DFITCPYEVSEGVLRCGKCDCTKILWFSKQTRSMDEPTTIFASCSNCKTRWT). 4 residues coordinate Zn(2+): cysteine 89, cysteine 103, cysteine 128, and cysteine 131.

The protein belongs to the IIV-6 349L family.

The polypeptide is Putative transcription elongation factor S-II-like protein 055R (Aedes vexans (Inland floodwater mosquito)).